The chain runs to 478 residues: GTPase Obg (478 aa).

In terms of domain architecture, Obg spans 2-159 (TTFVDRVELH…RDIVLELKTV (158 aa)). The tract at residues 61 to 87 (HHSPHRKATNGQPGAGDNRSGKDGQDL) is disordered. The OBG-type G domain maps to 160–330 (ADVALVGYPS…LSFALAGIIA (171 aa)). Residues 166–173 (GYPSAGKS), 191–195 (FTTLV), 212–215 (DVPG), 282–285 (NKVD), and 311–313 (SAI) each bind GTP. Mg(2+) is bound by residues Ser-173 and Thr-193. Residues 348-430 (PRAVDDAGFT…ENAVVFDWEP (83 aa)) form the OCT domain. Positions 436 to 478 (AEMLGRRGEDHRLEEPRPAAQRRRERDAERDDAEKEYDEFDPF) are disordered. Residues 439-468 (LGRRGEDHRLEEPRPAAQRRRERDAERDDA) show a composition bias toward basic and acidic residues. Residues 469–478 (EKEYDEFDPF) are compositionally biased toward acidic residues.

It belongs to the TRAFAC class OBG-HflX-like GTPase superfamily. OBG GTPase family. Monomer. Requires Mg(2+) as cofactor.

The protein resides in the cytoplasm. Functionally, an essential GTPase which binds GTP, GDP and possibly (p)ppGpp with moderate affinity, with high nucleotide exchange rates and a fairly low GTP hydrolysis rate. Plays a role in control of the cell cycle, stress response, ribosome biogenesis and in those bacteria that undergo differentiation, in morphogenesis control. This Streptomyces griseus subsp. griseus (strain JCM 4626 / CBS 651.72 / NBRC 13350 / KCC S-0626 / ISP 5235) protein is GTPase Obg.